The sequence spans 161 residues: 2-C-methyl-D-erythritol 2,4-cyclodiphosphate synthase (161 aa).

Residues Asp13 and His15 each coordinate a divalent metal cation. 4-CDP-2-C-methyl-D-erythritol 2-phosphate-binding positions include 13-15 (DAH) and 40-41 (HS). His48 lines the a divalent metal cation pocket. 62–64 (DIG) contributes to the 4-CDP-2-C-methyl-D-erythritol 2-phosphate binding site.

This sequence belongs to the IspF family. In terms of assembly, homotrimer. A divalent metal cation is required as a cofactor.

The catalysed reaction is 4-CDP-2-C-methyl-D-erythritol 2-phosphate = 2-C-methyl-D-erythritol 2,4-cyclic diphosphate + CMP. The protein operates within isoprenoid biosynthesis; isopentenyl diphosphate biosynthesis via DXP pathway; isopentenyl diphosphate from 1-deoxy-D-xylulose 5-phosphate: step 4/6. In terms of biological role, involved in the biosynthesis of isopentenyl diphosphate (IPP) and dimethylallyl diphosphate (DMAPP), two major building blocks of isoprenoid compounds. Catalyzes the conversion of 4-diphosphocytidyl-2-C-methyl-D-erythritol 2-phosphate (CDP-ME2P) to 2-C-methyl-D-erythritol 2,4-cyclodiphosphate (ME-CPP) with a corresponding release of cytidine 5-monophosphate (CMP). This Deinococcus radiodurans (strain ATCC 13939 / DSM 20539 / JCM 16871 / CCUG 27074 / LMG 4051 / NBRC 15346 / NCIMB 9279 / VKM B-1422 / R1) protein is 2-C-methyl-D-erythritol 2,4-cyclodiphosphate synthase.